We begin with the raw amino-acid sequence, 206 residues long: Guanylate kinase (206 aa).

The region spanning 13 to 193 (PLLLVVSGPS…AVSEIMSIIS (181 aa)) is the Guanylate kinase-like domain. 20–27 (GPSGVGKD) contacts ATP.

Belongs to the guanylate kinase family.

It is found in the cytoplasm. It catalyses the reaction GMP + ATP = GDP + ADP. Essential for recycling GMP and indirectly, cGMP. The polypeptide is Guanylate kinase (Dehalococcoides mccartyi (strain ATCC BAA-2266 / KCTC 15142 / 195) (Dehalococcoides ethenogenes (strain 195))).